Here is a 358-residue protein sequence, read N- to C-terminus: Alanine racemase (358 aa).

The active-site Proton acceptor; specific for D-alanine is K35. K35 carries the N6-(pyridoxal phosphate)lysine modification. R130 contributes to the substrate binding site. Y255 (proton acceptor; specific for L-alanine) is an active-site residue. Position 303 (M303) interacts with substrate.

The protein belongs to the alanine racemase family. The cofactor is pyridoxal 5'-phosphate.

It catalyses the reaction L-alanine = D-alanine. It functions in the pathway amino-acid biosynthesis; D-alanine biosynthesis; D-alanine from L-alanine: step 1/1. Functionally, catalyzes the interconversion of L-alanine and D-alanine. May also act on other amino acids. The polypeptide is Alanine racemase (alr) (Shewanella loihica (strain ATCC BAA-1088 / PV-4)).